A 391-amino-acid polypeptide reads, in one-letter code: UPF0229 protein BCB4264_A0587 (391 aa).

The span at 1 to 16 (MGEENQPNYTISQENW) shows a compositional bias: polar residues. Disordered stretches follow at residues 1 to 31 (MGEE…RHQE) and 80 to 117 (HVGQ…GDAA). Residues 21–31 (KGYDDQQRHQE) are compositionally biased toward basic and acidic residues. Residues 98–115 (GSGGQKQKGPGKGQGAGD) are compositionally biased toward gly residues.

This sequence belongs to the UPF0229 family.

The polypeptide is UPF0229 protein BCB4264_A0587 (Bacillus cereus (strain B4264)).